The sequence spans 441 residues: MLAIVVSRADEASEHIGRKLRSLADWTEHEDERRADGAGGGTYYRTDRAELRIFDDLHIHLDGAASAFEEPDLLVFASRHSGDTGPLLTAHATGNFGPAEYGGGDGSLARAAPNALSAVRDAFETHAPDDYDVGIECTHHGPSTVGCSSLFVELGSGPDQWQDSEGAAAVARSILSLRGVEPHTERTVVGFGGGHYAPRFDRVLTDTDWGVGHVAADWSLTELGDPRDSRAVIAKAFQASGTEFALVDGDRPELEAVIEDLGFEVLSETFLQETTGVPLSLVGRLEDDCGPIDDGLRLGEPATGYDGEFVTEELPDELLDEANGVDRTAVREAADAVALAYGTADGGSLAVGPVALAAADDYRSLVESLAAVLDTKYDSVEIEASTVIAHREAFDPELARDAGVDEGPAFGKLSSGASVDVDGETVTPDDVHRVRERRFEF.

The protein belongs to the DtdA deacylase family. In terms of assembly, monomer. Requires Zn(2+) as cofactor.

It catalyses the reaction a D-aminoacyl-tRNA + H2O = a tRNA + a D-alpha-amino acid + H(+). It carries out the reaction glycyl-tRNA(Ala) + H2O = tRNA(Ala) + glycine + H(+). In terms of biological role, D-aminoacyl-tRNA deacylase with broad substrate specificity. By recycling D-aminoacyl-tRNA to D-amino acids and free tRNA molecules, this enzyme counteracts the toxicity associated with the formation of D-aminoacyl-tRNA entities in vivo. The polypeptide is D-aminoacyl-tRNA deacylase (Natronomonas pharaonis (strain ATCC 35678 / DSM 2160 / CIP 103997 / JCM 8858 / NBRC 14720 / NCIMB 2260 / Gabara) (Halobacterium pharaonis)).